Reading from the N-terminus, the 175-residue chain is Cell number regulator 9 (175 aa).

2 helical membrane passes run 53-73 (GLCCLTCWCPCITFGRIAEIV) and 80-100 (CGVAGTIYTLLACFTGCHWIY).

The protein belongs to the cornifelin family. Expressed in roots, coleoptiles, leaves and stalks.

It is found in the membrane. The chain is Cell number regulator 9 (CNR9) from Zea mays (Maize).